We begin with the raw amino-acid sequence, 199 residues long: Small ribosomal subunit protein uS4 (199 aa).

The region spanning A91–A153 is the S4 RNA-binding domain.

It belongs to the universal ribosomal protein uS4 family. In terms of assembly, part of the 30S ribosomal subunit. Contacts protein S5. The interaction surface between S4 and S5 is involved in control of translational fidelity.

In terms of biological role, one of the primary rRNA binding proteins, it binds directly to 16S rRNA where it nucleates assembly of the body of the 30S subunit. With S5 and S12 plays an important role in translational accuracy. This chain is Small ribosomal subunit protein uS4, found in Exiguobacterium sibiricum (strain DSM 17290 / CCUG 55495 / CIP 109462 / JCM 13490 / 255-15).